The chain runs to 195 residues: MGNIFGRWPGARKAIEDLHNTSSEPVGQASQDLQNKGGLTTNTLGTSADVLEYSADHTEEEVGFPVRPAVPMRPMTEKLAIDLSWFLKEKGGLDGLFFSPKRAAILDTWMYNTQGVFPDWQNYTPGPGIRYPLCRGWLFKLVPVDPPEDDEKNILLHPACSHGTTDPDGETLIWRFDSSLARRHIARERYPEYFK.

Gly-2 carries N-myristoyl glycine; by host lipidation. The N-terminal; associates with the host plasma membrane stretch occupies residues 2-53; that stretch reads GNIFGRWPGARKAIEDLHNTSSEPVGQASQDLQNKGGLTTNTLGTSADVLEY. Residues 7-22 form a necessary for MHC-I internalization region; the sequence is RWPGARKAIEDLHNTS. The interval 59-61 is acidic; the sequence is EEE. The tract at residues 65–74 is SH3-binding; it reads PVRPAVPMRP. Residues 65 to 74 are SH3-binding; interaction with Src family tyrosine kinases; it reads PVRPAVPMRP. The PxxP signature appears at 68–71; sequence PAVP. The tract at residues 104–120 is mediates dimerization; it reads AILDTWMYNTQGVFPDW. Residues 144-171 form a binding to ATP6V1H region; sequence VDPPEDDEKNILLHPACSHGTTDPDGET. The Di-leucine internalization motif; necessary for CD4 internalization signature appears at 155-156; sequence LL.

The protein belongs to the lentivirus primate group Nef protein family. As to quaternary structure, homodimer.

Its subcellular location is the host cell membrane. The protein resides in the host cytoplasm. It is found in the host perinuclear region. It localises to the virion. The protein localises to the secreted. Factor of infectivity and pathogenicity, required for optimal virus replication. Alters numerous pathways of T-lymphocyte function and down-regulates immunity surface molecules in order to evade host defense and increase viral infectivity. Alters the functionality of other immunity cells, like dendritic cells, monocytes/macrophages and NK cells. One of the earliest and most abundantly expressed viral proteins. Its function is as follows. In infected CD4(+) T-lymphocytes, down-regulates the surface MHC-I, mature MHC-II, CD4, CD28 and probably other immunity surface molecules. In consequence infected cells are masked for immune recognition by cytotoxic T-lymphocytes. Decreasing the number of immune receptors also prevents reinfection by more HIV particles (superinfection). In terms of biological role, bypasses host T-cell signaling by inducing a transcriptional program nearly identical to that of anti-CD3 cell activation. Interaction with TCR-zeta chain up-regulates the Fas ligand (FasL). Increasing surface FasL molecules and decreasing surface MHC-I molecules on infected CD4(+) cells send attacking cytotoxic CD8+ T-lymphocytes into apoptosis. Functionally, plays a role in optimizing the host cell environment for viral replication without causing cell death by apoptosis. Protects the infected cells from apoptosis in order to keep them alive until the next virus generation is ready to strike. The sequence is that of Protein Nef from Pan troglodytes (Chimpanzee).